Here is a 736-residue protein sequence, read N- to C-terminus: Epithelial splicing regulatory protein 2 (736 aa).

3 consecutive RRM domains span residues 224–301 (TVIR…KATG), 325–405 (MIIR…RSTA), and 659–736 (ALVR…ACCE).

This sequence belongs to the ESRP family.

Its subcellular location is the nucleus. Its function is as follows. mRNA splicing factor that regulates the formation of epithelial cell-specific isoforms. Specifically regulates the expression of FGFR2-IIIb, an epithelial cell-specific isoform of fgfr2. Acts by directly binding specific sequences in mRNAs. Binds the GU-rich sequence motifs in the ISE/ISS-3, a cis-element regulatory region present in the mRNA of fgfr2. This Danio rerio (Zebrafish) protein is Epithelial splicing regulatory protein 2 (esrp2).